Reading from the N-terminus, the 486-residue chain is Regulatory protein ViaA (486 aa).

Belongs to the ViaA family. Homodimer. Interacts with RavA.

The protein resides in the cytoplasm. Component of the RavA-ViaA chaperone complex, which may act on the membrane to optimize the function of some of the respiratory chains. ViaA stimulates the ATPase activity of RavA. The sequence is that of Regulatory protein ViaA from Erwinia tasmaniensis (strain DSM 17950 / CFBP 7177 / CIP 109463 / NCPPB 4357 / Et1/99).